An 859-amino-acid chain; its full sequence is Mycobactin import ATP-binding/permease protein IrtA (859 aa).

Topologically, residues 1–292 (MARGLQGVML…SRLLAPLKLP (292 aa)) are cytoplasmic. An FAD-binding FR-type domain is found at 15-122 (ARDHTATVIE…MSLMGSSRFD (108 aa)). Residues 70–73 (RAYT), 87–91 (DVVLH), and 97–98 (AS) contribute to the FAD site. Positions 247-267 (HRATEPAATEPEVGAAPQPES) are disordered. The chain crosses the membrane as a helical span at residues 293 to 313 (LVLSGVLAALVTLAQLAPFVL). One can recognise an ABC transmembrane type-1 domain in the interval 293 to 575 (LVLSGVLAAL…IAYGLGGLRT (283 aa)). Over 314–334 (LVELSRLLVSGAGAHRLFTVG) the chain is Periplasmic. The helical transmembrane segment at 335-355 (FAAVGLLGTGALLAAALTLWL) threads the bilayer. At 356–408 (HVIDARFARALRLRLLSKLSRLPLGWFTSRGSGSIKKLVTDDTLALHYLVTHA) the chain is on the cytoplasmic side. The helical transmembrane segment at 409–429 (VPDAVAAVVAPVGVLVYLFVV) threads the bilayer. The Periplasmic portion of the chain corresponds to 430–432 (DWR). Residues 433-453 (VALVLFGPVLVYLTITSSLTI) traverse the membrane as a helical segment. Residues 454–519 (QSGPRIVQAQ…PLAGKKTLMD (66 aa)) are Cytoplasmic-facing. Residues 520–540 (LATRPATFLWLIAATGTLLVA) form a helical membrane-spanning segment. The Periplasmic segment spans residues 541–548 (THRMDPVN). A helical transmembrane segment spans residues 549–569 (LLPFMFLGTTFGARLLGIAYG). Residues 570-859 (LGGLRTGLLA…AVAAAQDGTR (290 aa)) are Cytoplasmic-facing. The ABC transporter domain occupies 610–843 (VVFDHVTFGY…GGRYCRLWDT (234 aa)). 643 to 650 (GPSGSGKS) serves as a coordination point for ATP.

Belongs to the ABC transporter superfamily. Siderophore-Fe(3+) uptake transporter (SIUT) (TC 3.A.1.21) family. In terms of assembly, forms a heterodimer with IrtB. It depends on FAD as a cofactor.

Its subcellular location is the cell inner membrane. In terms of biological role, part of the ABC transporter complex IrtAB involved in the import of iron-bound mycobactin (Fe-MBT) and carboxymycobactin (Fe-cMBT). Mycobactins are then reduced by the siderophore interaction domain to facilitate iron release in the bacterial cell. Transmembrane domains (TMD) form a pore in the membrane and the ATP-binding domain (NBD) is responsible for energy generation. Required for replication in human macrophages and in mouse lungs. The chain is Mycobactin import ATP-binding/permease protein IrtA (irtA) from Mycobacterium tuberculosis (strain ATCC 25618 / H37Rv).